The primary structure comprises 328 residues: 7,8-didemethyl-8-hydroxy-5-deazariboflavin synthase (328 aa).

The Radical SAM core domain occupies 1 to 242 (MTYSRNIFIP…PDVSIQVPPN (242 aa)). [4Fe-4S] cluster contacts are provided by cysteine 15, cysteine 19, and cysteine 22.

The protein belongs to the radical SAM superfamily. CofG family. Consists of two subunits, CofG and CofH. Requires [4Fe-4S] cluster as cofactor.

It carries out the reaction 5-amino-5-(4-hydroxybenzyl)-6-(D-ribitylimino)-5,6-dihydrouracil + S-adenosyl-L-methionine = 7,8-didemethyl-8-hydroxy-5-deazariboflavin + 5'-deoxyadenosine + L-methionine + NH4(+) + H(+). Its pathway is cofactor biosynthesis; coenzyme F0 biosynthesis. Functionally, catalyzes the radical-mediated synthesis of 7,8-didemethyl-8-hydroxy-5-deazariboflavin from 5-amino-5-(4-hydroxybenzyl)-6-(D-ribitylimino)-5,6-dihydrouracil. The sequence is that of 7,8-didemethyl-8-hydroxy-5-deazariboflavin synthase from Methanothermobacter thermautotrophicus (strain ATCC 29096 / DSM 1053 / JCM 10044 / NBRC 100330 / Delta H) (Methanobacterium thermoautotrophicum).